Reading from the N-terminus, the 406-residue chain is FBD-associated F-box protein At1g60410 (406 aa).

Residues 9–59 (KDRLSDLPCHLLCRILSNLSTKESVRTSVLSPRWSNLWSLVSVLDLDFQDF) form the F-box domain. The region spanning 355-405 (MEEIKLSPVPQCVLSSLDFLQLKAPSTPSKMKLATYFRKKCTRLTKMLLSG) is the FBD domain.

The chain is FBD-associated F-box protein At1g60410 from Arabidopsis thaliana (Mouse-ear cress).